The chain runs to 832 residues: Spindle pole body component alp6 (832 aa).

The segment at 1-186 is interaction with mzt1; that stretch reads MSEIHVKTAL…STETSSVQHT (186 aa). Phosphothreonine is present on Thr286.

It belongs to the TUBGCP family. In terms of assembly, part of the gamma-tubulin complex. Interacts directly with mzt1. Interacts with mto1. Interacts with mto2.

Its subcellular location is the cytoplasm. It is found in the cytoskeleton. The protein localises to the microtubule organizing center. The protein resides in the spindle pole body. Its function is as follows. Component of the gamma tubule complex that is required for the regulation of both interphase microtubules and mitotic bipolar spindles. This is Spindle pole body component alp6 (alp6) from Schizosaccharomyces pombe (strain 972 / ATCC 24843) (Fission yeast).